The sequence spans 792 residues: Coiled-coil domain-containing protein R3HCC1L (792 aa).

Residues 7 to 27 are EJC-binding motif; may mediate interaction with the EJC; the sequence is RCRVRARRPDMALYVPKARRG. Disordered stretches follow at residues 32–61 and 527–567; these read KTGD…QKEV and EFKT…TSHT. Ser-688 is subject to Phosphoserine. Thr-712 carries the phosphothreonine modification. Residues 751-783 adopt a coiled-coil conformation; sequence RSKQSKTEREAELKKLQEARERKRLEAKQREDI. Residues 772–792 form a disordered region; sequence RKRLEAKQREDIWEGRDQSTV.

In terms of assembly, may interact with the exon junction complex (EJC) composed at least of CASC3, EIF4A3, MAGOH and RBM8A. As to expression, expressed in placenta.

The protein is Coiled-coil domain-containing protein R3HCC1L (R3HCC1L) of Homo sapiens (Human).